The chain runs to 328 residues: UPF0252 protein PF0978 (328 aa).

A helical transmembrane segment spans residues 3–23; sequence VPLLILLFLVLTSGCIAPSTP.

Belongs to the UPF0252 family.

It localises to the membrane. The sequence is that of UPF0252 protein PF0978 from Pyrococcus furiosus (strain ATCC 43587 / DSM 3638 / JCM 8422 / Vc1).